Consider the following 319-residue polypeptide: uncharacterized protein (319 aa).

Residues 270 to 290 traverse the membrane as a helical segment; it reads AAALWWIPAWLAMIVEVAVLG.

The protein resides in the membrane. This is an uncharacterized protein from Mycobacterium tuberculosis (strain CDC 1551 / Oshkosh).